A 406-amino-acid chain; its full sequence is Elongation factor Tu, chloroplastic (406 aa).

Residues 8-210 enclose the tr-type G domain; the sequence is KTHINIATIG…LLDSYIPKPK (203 aa). Residues 17–24, 77–81, and 132–135 contribute to the GTP site; these read GHFNHGKT, DCPGH, and NKED. T24 provides a ligand contact to Mg(2+).

It belongs to the TRAFAC class translation factor GTPase superfamily. Classic translation factor GTPase family. EF-Tu/EF-1A subfamily. As to quaternary structure, monomer.

It localises to the plastid. It is found in the chloroplast. The catalysed reaction is GTP + H2O = GDP + phosphate + H(+). In terms of biological role, GTP hydrolase that promotes the GTP-dependent binding of aminoacyl-tRNA to the A-site of ribosomes during protein biosynthesis. The chain is Elongation factor Tu, chloroplastic (tufA) from Chaetosphaeridium globosum (Charophycean green alga).